Reading from the N-terminus, the 725-residue chain is Homeobox protein unc-62 (725 aa).

The MEIS N-terminal domain occupies 133 to 218 (SSDVCSSASF…PLDIVGDERA (86 aa)). 6 disordered regions span residues 214–258 (GDER…PYEP), 295–317 (SSSS…LHST), 329–359 (VSSP…GNSM), 386–419 (SLHQ…PPPQ), 491–555 (VKME…KRKV), and 615–661 (IDQN…PDPT). The segment covering 219-239 (SSSQPPMSPGSMGHHGHSGSP) has biased composition (low complexity). Residues 388-400 (HQHHLHHPHHFPH) show a composition bias toward basic residues. The span at 498-508 (SVSSSKSGGKK) shows a compositional bias: low complexity. The span at 541–550 (LSDSANGSQN) shows a compositional bias: polar residues. A DNA-binding region (homeobox; TALE-type) is located at residues 552–614 (KRKVPKVFSK…NARRRIVQPM (63 aa)).

Belongs to the TALE/MEIS homeobox family.

Its subcellular location is the nucleus. Functionally, acts redundantly with ceh-20 and ceh-40 to perform overlapping roles during embryogenesis. Required for postembryonic development of the ectoderm, including the Q, V and P cell lineages, playing a crucial role in ensuring that these cells and their descendants undergo their invariant patterns of cell division, migration, fusion and morphogenesis. Has a role in the mig-13 pathway to promote anterior migration of neuroblasts in the Q lineage. Required for multiple roles in regulating vulva development. The protein is Homeobox protein unc-62 (unc-62) of Caenorhabditis briggsae.